A 465-amino-acid polypeptide reads, in one-letter code: tRNA-2-methylthio-N(6)-dimethylallyladenosine synthase (465 aa).

The region spanning 18-136 is the MTTase N-terminal domain; that stretch reads RKLYIETYGC…LPNLVGAAEQ (119 aa). Cys-27, Cys-63, Cys-100, Cys-174, Cys-178, and Cys-181 together coordinate [4Fe-4S] cluster. The region spanning 160 to 392 is the Radical SAM core domain; that stretch reads GGVHINGFVS…IALQNRLSEE (233 aa). The region spanning 395-458 is the TRAM domain; that stretch reads KRDISKTFEV…SATLFGEVVE (64 aa).

This sequence belongs to the methylthiotransferase family. MiaB subfamily. Monomer. [4Fe-4S] cluster serves as cofactor.

It localises to the cytoplasm. It carries out the reaction N(6)-dimethylallyladenosine(37) in tRNA + (sulfur carrier)-SH + AH2 + 2 S-adenosyl-L-methionine = 2-methylsulfanyl-N(6)-dimethylallyladenosine(37) in tRNA + (sulfur carrier)-H + 5'-deoxyadenosine + L-methionine + A + S-adenosyl-L-homocysteine + 2 H(+). In terms of biological role, catalyzes the methylthiolation of N6-(dimethylallyl)adenosine (i(6)A), leading to the formation of 2-methylthio-N6-(dimethylallyl)adenosine (ms(2)i(6)A) at position 37 in tRNAs that read codons beginning with uridine. This chain is tRNA-2-methylthio-N(6)-dimethylallyladenosine synthase, found in Porphyromonas gingivalis (strain ATCC 33277 / DSM 20709 / CIP 103683 / JCM 12257 / NCTC 11834 / 2561).